Consider the following 425-residue polypeptide: Serine--tRNA ligase (425 aa).

Residue 228 to 230 (TAE) coordinates L-serine. ATP is bound at residue 259–261 (RSE). Residue Glu-282 participates in L-serine binding. 346–349 (EIAS) contacts ATP. Position 382 (Ser-382) interacts with L-serine.

This sequence belongs to the class-II aminoacyl-tRNA synthetase family. Type-1 seryl-tRNA synthetase subfamily. Homodimer. The tRNA molecule binds across the dimer.

The protein localises to the cytoplasm. It catalyses the reaction tRNA(Ser) + L-serine + ATP = L-seryl-tRNA(Ser) + AMP + diphosphate + H(+). It carries out the reaction tRNA(Sec) + L-serine + ATP = L-seryl-tRNA(Sec) + AMP + diphosphate + H(+). It participates in aminoacyl-tRNA biosynthesis; selenocysteinyl-tRNA(Sec) biosynthesis; L-seryl-tRNA(Sec) from L-serine and tRNA(Sec): step 1/1. In terms of biological role, catalyzes the attachment of serine to tRNA(Ser). Is also able to aminoacylate tRNA(Sec) with serine, to form the misacylated tRNA L-seryl-tRNA(Sec), which will be further converted into selenocysteinyl-tRNA(Sec). This Rickettsia prowazekii (strain Madrid E) protein is Serine--tRNA ligase.